We begin with the raw amino-acid sequence, 76 residues long: uncharacterized protein (76 aa).

To L.innocua lin1255, lin1742 and lin2600.

This is an uncharacterized protein from Listeria innocua serovar 6a (strain ATCC BAA-680 / CLIP 11262).